The chain runs to 735 residues: 1,4-alpha-glucan branching enzyme GlgB (735 aa).

Asp418 (nucleophile) is an active-site residue. Glu471 serves as the catalytic Proton donor.

The protein belongs to the glycosyl hydrolase 13 family. GlgB subfamily. As to quaternary structure, monomer.

It carries out the reaction Transfers a segment of a (1-&gt;4)-alpha-D-glucan chain to a primary hydroxy group in a similar glucan chain.. Its pathway is glycan biosynthesis; glycogen biosynthesis. Its function is as follows. Catalyzes the formation of the alpha-1,6-glucosidic linkages in glycogen by scission of a 1,4-alpha-linked oligosaccharide from growing alpha-1,4-glucan chains and the subsequent attachment of the oligosaccharide to the alpha-1,6 position. The polypeptide is 1,4-alpha-glucan branching enzyme GlgB (Agrobacterium fabrum (strain C58 / ATCC 33970) (Agrobacterium tumefaciens (strain C58))).